We begin with the raw amino-acid sequence, 245 residues long: Uridylate kinase (245 aa).

12–15 (KISG) is an ATP binding site. Residue G55 coordinates UMP. ATP is bound by residues G56 and R60. Residues D76 and 137-144 (AGAPYLTT) each bind UMP. ATP contacts are provided by T164, Y171, and D174.

It belongs to the UMP kinase family. As to quaternary structure, homohexamer.

The protein resides in the cytoplasm. The enzyme catalyses UMP + ATP = UDP + ADP. Its pathway is pyrimidine metabolism; CTP biosynthesis via de novo pathway; UDP from UMP (UMPK route): step 1/1. Inhibited by UTP. Its function is as follows. Catalyzes the reversible phosphorylation of UMP to UDP. This is Uridylate kinase from Chlamydia muridarum (strain MoPn / Nigg).